A 755-amino-acid chain; its full sequence is SWI/SNF-related matrix-associated actin-dependent regulator of chromatin subfamily A-like protein 1 (755 aa).

Positions 7 to 27 (SEIAEKKRIALAKLQAKKSQL) form a coiled coil. Disordered stretches follow at residues 26–91 (QLLA…NKSS) and 104–134 (SNRE…SLSS). Polar residues predominate over residues 32 to 63 (PATNGKSTTSATGATQHANNGKSNPNQPQAKS). A Phosphoserine modification is found at Ser63. In terms of domain architecture, HARP spans 139–217 (PVAVLLGNSI…KPYVHMNGIP (79 aa)). Residues 256–412 (CFAIAQKGRI…FTQLQMIDGK (157 aa)) form the Helicase ATP-binding domain. 269–276 (DEMGLGKT) contributes to the ATP binding site. The short motif at 361-364 (DESH) is the DESH box element. The Helicase C-terminal domain maps to 527–681 (YLKTLVKEQK…NLQKATHTAA (155 aa)).

It belongs to the SNF2/RAD54 helicase family. SMARCAL1 subfamily.

It localises to the nucleus. Its function is as follows. ATP-dependent annealing helicase that catalyzes the rewinding of the stably unwound DNA. In Drosophila melanogaster (Fruit fly), this protein is SWI/SNF-related matrix-associated actin-dependent regulator of chromatin subfamily A-like protein 1 (Marcal1).